The sequence spans 594 residues: Putative lipase ATG15-1 (594 aa).

Topologically, residues 1 to 12 are cytoplasmic; it reads MRRRPLCTSASR. Residues 13-33 form a helical; Signal-anchor for type II membrane protein membrane-spanning segment; that stretch reads VTASLLLSFLAVSSAAELPIL. Residues 34-594 lie on the Lumenal side of the membrane; sequence PAPPISPQPH…ANHFVYVLHA (561 aa). N-linked (GlcNAc...) asparagine glycosylation is found at asparagine 144, asparagine 179, asparagine 201, asparagine 259, and asparagine 283. Serine 299 serves as the catalytic Charge relay system. Asparagine 432 and asparagine 445 each carry an N-linked (GlcNAc...) asparagine glycan. A compositionally biased stretch (low complexity) spans 447 to 469; that stretch reads TETTTTSTSKPTSTSKSSKSNTR. Disordered regions lie at residues 447 to 473 and 489 to 509; these read TETTTTSTSKPTSTSKSSKSNTRTRTE and TGTQTSTSTPKHTSTSSTSTC. N-linked (GlcNAc...) asparagine glycosylation is found at asparagine 576 and asparagine 582.

This sequence belongs to the AB hydrolase superfamily. Lipase family. As to quaternary structure, binds to both phosphatidylinositol (PI) and phosphatidylinositol 3,5-bisphosphate (PIP2).

It localises to the endosome. It is found in the multivesicular body membrane. Its subcellular location is the prevacuolar compartment membrane. It carries out the reaction a triacylglycerol + H2O = a diacylglycerol + a fatty acid + H(+). Its function is as follows. Lipase which is essential for lysis of subvacuolar cytoplasm to vacuole targeted bodies and intravacuolar autophagic bodies. Involved in the lysis of intravacuolar multivesicular body (MVB) vesicles. The intravacuolar membrane disintegration by ATG15 is critical to life span extension. The chain is Putative lipase ATG15-1 (ATG15-1) from Phaeosphaeria nodorum (strain SN15 / ATCC MYA-4574 / FGSC 10173) (Glume blotch fungus).